The sequence spans 339 residues: Phosphate acyltransferase (339 aa).

Belongs to the PlsX family. As to quaternary structure, homodimer. Probably interacts with PlsY.

Its subcellular location is the cytoplasm. It carries out the reaction a fatty acyl-[ACP] + phosphate = an acyl phosphate + holo-[ACP]. It functions in the pathway lipid metabolism; phospholipid metabolism. In terms of biological role, catalyzes the reversible formation of acyl-phosphate (acyl-PO(4)) from acyl-[acyl-carrier-protein] (acyl-ACP). This enzyme utilizes acyl-ACP as fatty acyl donor, but not acyl-CoA. This Clostridium perfringens (strain SM101 / Type A) protein is Phosphate acyltransferase.